A 212-amino-acid chain; its full sequence is Glycerol-3-phosphate acyltransferase (212 aa).

5 consecutive transmembrane segments (helical) span residues 5–25 (ALGMIIFAYLCGSISSAILVC), 53–73 (VAAAAVLVFDILKGMLPVWLA), 80–100 (PLYLGLTAIAACLGHIYPVFF), 112–132 (FGAIAPIGWDLTGLMTGTWLL), and 138–158 (GYSSLGAIISALIAPFYVWWF).

The protein belongs to the PlsY family. Probably interacts with PlsX.

It localises to the cell inner membrane. The catalysed reaction is an acyl phosphate + sn-glycerol 3-phosphate = a 1-acyl-sn-glycero-3-phosphate + phosphate. It participates in lipid metabolism; phospholipid metabolism. Its function is as follows. Catalyzes the transfer of an acyl group from acyl-phosphate (acyl-PO(4)) to glycerol-3-phosphate (G3P) to form lysophosphatidic acid (LPA). This enzyme utilizes acyl-phosphate as fatty acyl donor, but not acyl-CoA or acyl-ACP. The polypeptide is Glycerol-3-phosphate acyltransferase (Serratia proteamaculans (strain 568)).